A 35-amino-acid chain; its full sequence is Entry-fusion complex protein OPG076 (35 aa).

Residues 2–22 (LVVIMFFIAFAFCSWLSYSYL) form a helical membrane-spanning segment. Over 23 to 35 (RPYISTKELNKSR) the chain is Virion surface.

The protein belongs to the orthopoxvirus OPG076 family. Component of the entry fusion complex (EFC) composed of OPG053, OPG076, OPG086, OPG094, OPG095, OPG099, OPG107, OPG143, OPG104, OPG147 and OPG155. Except for OPG095 and OPG053, each of the EFC proteins is required for assembly or stability of the complex. In terms of processing, unglycosylated because produced in viral factories instead of the classic ER -Golgi route.

The protein resides in the virion membrane. Functionally, component of the entry fusion complex (EFC), which consists of 11 proteins. During cell infection, this complex mediates entry of the virion core into the host cytoplasm by a two-step mechanism consisting of lipid mixing of the viral and cellular membranes and subsequent pore formation. This is Entry-fusion complex protein OPG076 (OPG076) from Vaccinia virus (strain Copenhagen) (VACV).